We begin with the raw amino-acid sequence, 95 residues long: Membrane protein insertion and folding monitor (95 aa).

Residues 12 to 32 (LFLVDFFTIILPALTAIGIAF) traverse the membrane as a helical segment. Positions 86–89 (DEED) are crucial for elongation arrest.

Its subcellular location is the cell membrane. In terms of biological role, sensor protein that up-regulates translation of the secondary membrane protein insertase (MisCB/YqjG) when activity of the primary membrane protein insertase (MisCA/SpoIIIJ) is limited. Acts as a ribosome-nascent chain complex. When the primary membrane protein insertase activity or level is reduced, the membrane insertion of MifM is impaired, which induces arrest of MifM translation and unfolding of the mRNA hairpin. Unfolding leads to translation of the downstream gene, which encodes the secondary membrane protein insertase MisCB/YqjG. Translation arrest of MifM is mediated by interaction of its C-terminal domain with the ribosomal polypeptide exit tunnel. Undergoes multisite stalling, which may allow a sufficient duration of ribosomal stalling and consequently sufficient levels of MisCB/YqjG. This Bacillus subtilis (strain 168) protein is Membrane protein insertion and folding monitor (mifM).